Here is a 259-residue protein sequence, read N- to C-terminus: Triosephosphate isomerase (259 aa).

10-12 contributes to the substrate binding site; that stretch reads NWK. Residue histidine 100 is the Electrophile of the active site. Glutamate 172 (proton acceptor) is an active-site residue. Residues glycine 178, serine 218, and 239-240 each bind substrate; that span reads GG.

Belongs to the triosephosphate isomerase family. In terms of assembly, homodimer.

It localises to the cytoplasm. The catalysed reaction is D-glyceraldehyde 3-phosphate = dihydroxyacetone phosphate. It participates in carbohydrate biosynthesis; gluconeogenesis. It functions in the pathway carbohydrate degradation; glycolysis; D-glyceraldehyde 3-phosphate from glycerone phosphate: step 1/1. Functionally, involved in the gluconeogenesis. Catalyzes stereospecifically the conversion of dihydroxyacetone phosphate (DHAP) to D-glyceraldehyde-3-phosphate (G3P). The sequence is that of Triosephosphate isomerase from Corynebacterium glutamicum (strain ATCC 13032 / DSM 20300 / JCM 1318 / BCRC 11384 / CCUG 27702 / LMG 3730 / NBRC 12168 / NCIMB 10025 / NRRL B-2784 / 534).